The primary structure comprises 172 residues: Adenine phosphoribosyltransferase (172 aa).

This sequence belongs to the purine/pyrimidine phosphoribosyltransferase family. As to quaternary structure, homodimer.

Its subcellular location is the cytoplasm. The catalysed reaction is AMP + diphosphate = 5-phospho-alpha-D-ribose 1-diphosphate + adenine. The protein operates within purine metabolism; AMP biosynthesis via salvage pathway; AMP from adenine: step 1/1. In terms of biological role, catalyzes a salvage reaction resulting in the formation of AMP, that is energically less costly than de novo synthesis. The polypeptide is Adenine phosphoribosyltransferase (Staphylococcus aureus (strain Mu3 / ATCC 700698)).